The following is a 230-amino-acid chain: 5'-methylthioadenosine/S-adenosylhomocysteine nucleosidase (230 aa).

The Proton acceptor role is filled by glutamate 12. Substrate contacts are provided by residues glycine 78, isoleucine 152, and 173–174; that span reads ME. Aspartate 197 serves as the catalytic Proton donor.

The protein belongs to the PNP/UDP phosphorylase family. MtnN subfamily.

It carries out the reaction S-adenosyl-L-homocysteine + H2O = S-(5-deoxy-D-ribos-5-yl)-L-homocysteine + adenine. It catalyses the reaction S-methyl-5'-thioadenosine + H2O = 5-(methylsulfanyl)-D-ribose + adenine. The catalysed reaction is 5'-deoxyadenosine + H2O = 5-deoxy-D-ribose + adenine. It functions in the pathway amino-acid biosynthesis; L-methionine biosynthesis via salvage pathway; S-methyl-5-thio-alpha-D-ribose 1-phosphate from S-methyl-5'-thioadenosine (hydrolase route): step 1/2. Its function is as follows. Catalyzes the irreversible cleavage of the glycosidic bond in both 5'-methylthioadenosine (MTA) and S-adenosylhomocysteine (SAH/AdoHcy) to adenine and the corresponding thioribose, 5'-methylthioribose and S-ribosylhomocysteine, respectively. Also cleaves 5'-deoxyadenosine, a toxic by-product of radical S-adenosylmethionine (SAM) enzymes, into 5-deoxyribose and adenine. This is 5'-methylthioadenosine/S-adenosylhomocysteine nucleosidase from Actinobacillus succinogenes (strain ATCC 55618 / DSM 22257 / CCUG 43843 / 130Z).